The sequence spans 254 residues: Imidazole glycerol phosphate synthase subunit HisF (254 aa).

Active-site residues include D11 and D130.

This sequence belongs to the HisA/HisF family. Heterodimer of HisH and HisF.

The protein localises to the cytoplasm. It carries out the reaction 5-[(5-phospho-1-deoxy-D-ribulos-1-ylimino)methylamino]-1-(5-phospho-beta-D-ribosyl)imidazole-4-carboxamide + L-glutamine = D-erythro-1-(imidazol-4-yl)glycerol 3-phosphate + 5-amino-1-(5-phospho-beta-D-ribosyl)imidazole-4-carboxamide + L-glutamate + H(+). It participates in amino-acid biosynthesis; L-histidine biosynthesis; L-histidine from 5-phospho-alpha-D-ribose 1-diphosphate: step 5/9. Functionally, IGPS catalyzes the conversion of PRFAR and glutamine to IGP, AICAR and glutamate. The HisF subunit catalyzes the cyclization activity that produces IGP and AICAR from PRFAR using the ammonia provided by the HisH subunit. The chain is Imidazole glycerol phosphate synthase subunit HisF from Gloeobacter violaceus (strain ATCC 29082 / PCC 7421).